A 630-amino-acid chain; its full sequence is tRNA uridine 5-carboxymethylaminomethyl modification enzyme MnmG (630 aa).

13–18 (GGGHAG) lines the FAD pocket. Residue 273-287 (GPRYCPSIEDKVMRF) participates in NAD(+) binding.

The protein belongs to the MnmG family. In terms of assembly, homodimer. Heterotetramer of two MnmE and two MnmG subunits. Requires FAD as cofactor.

Its subcellular location is the cytoplasm. Functionally, NAD-binding protein involved in the addition of a carboxymethylaminomethyl (cmnm) group at the wobble position (U34) of certain tRNAs, forming tRNA-cmnm(5)s(2)U34. The sequence is that of tRNA uridine 5-carboxymethylaminomethyl modification enzyme MnmG from Actinobacillus pleuropneumoniae serotype 3 (strain JL03).